Reading from the N-terminus, the 1906-residue chain is Alpha-2-macroglobulin homolog (1906 aa).

Positions 1–21 (MIIRVCIRCFIVLTLVLGIGG) are cleaved as a signal peptide. A lipid anchor (N-palmitoyl cysteine) is attached at C22. A lipid anchor (S-diacylglycerol cysteine) is attached at C22.

This sequence belongs to the protease inhibitor I39 (alpha-2-macroglobulin) family. Bacterial alpha-2-macroglobulin subfamily.

The protein resides in the cell membrane. In Nostoc sp. (strain PCC 7120 / SAG 25.82 / UTEX 2576), this protein is Alpha-2-macroglobulin homolog.